A 418-amino-acid polypeptide reads, in one-letter code: Putative FBD-associated F-box protein At5g56560 (418 aa).

Residues 4–60 (QTRLSDLPDELLLKILSALPMFKVTLATRLISRRWKGPWKLVPDVTFDDDDIPFKSF) form the F-box domain. The region spanning 340–390 (LWEEPAVVAKCLSEHLEIFEWRQYEGTEQERNVAGYILANATCLKMATFST) is the FBD domain.

This is Putative FBD-associated F-box protein At5g56560 from Arabidopsis thaliana (Mouse-ear cress).